Reading from the N-terminus, the 580-residue chain is V-type proton ATPase catalytic subunit A (580 aa).

ATP is bound at residue 209–216 (GAFGCGKT).

Belongs to the ATPase alpha/beta chains family. As to quaternary structure, V-ATPase is a heteromultimeric enzyme composed of a peripheral catalytic V1 complex (main components: subunits A, B, C, D, E, and F) attached to an integral membrane V0 proton pore complex (main component: the proteolipid protein).

It catalyses the reaction ATP + H2O + 4 H(+)(in) = ADP + phosphate + 5 H(+)(out). In terms of biological role, catalytic subunit of the peripheral V1 complex of vacuolar ATPase. V-ATPase vacuolar ATPase is responsible for acidifying a variety of intracellular compartments in eukaryotic cells. The polypeptide is V-type proton ATPase catalytic subunit A (Hordeum vulgare (Barley)).